Here is a 229-residue protein sequence, read N- to C-terminus: Potassium/proton antiporter CemA (229 aa).

3 helical membrane-spanning segments follow: residues 6–26 (AFIP…ISLC), 107–127 (ILHF…SFWG), and 189–209 (ILSG…KYWI).

It belongs to the CemA family.

Its subcellular location is the plastid. It is found in the chloroplast inner membrane. It carries out the reaction K(+)(in) + H(+)(out) = K(+)(out) + H(+)(in). Its function is as follows. Contributes to K(+)/H(+) antiport activity by supporting proton efflux to control proton extrusion and homeostasis in chloroplasts in a light-dependent manner to modulate photosynthesis. Prevents excessive induction of non-photochemical quenching (NPQ) under continuous-light conditions. Indirectly promotes efficient inorganic carbon uptake into chloroplasts. The sequence is that of Potassium/proton antiporter CemA from Lepidium virginicum (Virginia pepperweed).